We begin with the raw amino-acid sequence, 276 residues long: Outer membrane lipoprotein 2 (276 aa).

An N-terminal signal peptide occupies residues 1–19; sequence MNFKKLLGVALVSALALTA. Cys-20 carries N-palmitoyl cysteine lipidation. Cys-20 carries the S-diacylglycerol cysteine lipid modification.

It belongs to the NlpA lipoprotein family.

The protein resides in the cell outer membrane. The sequence is that of Outer membrane lipoprotein 2 (plpB) from Mannheimia haemolytica (Pasteurella haemolytica).